Here is a 442-residue protein sequence, read N- to C-terminus: Protein PHYTOCHROME KINASE SUBSTRATE 2 (442 aa).

Residues 110–130 form a disordered region; the sequence is IFVGPKQSSKNSSETPSLRSE. Over residues 121–130 the composition is skewed to low complexity; that stretch reads SSETPSLRSE. A phosphoserine mark is found at Ser-239 and Ser-245. The tract at residues 394–442 is disordered; it reads VSGDSYTSMNRTPSYVPRFPVEANPTSTETRRRISSSSVSHTQSPFLYT. Over residues 397–406 the composition is skewed to polar residues; the sequence is DSYTSMNRTP. Positions 428–442 are enriched in low complexity; the sequence is SSSSVSHTQSPFLYT.

It belongs to the PKS family. As to quaternary structure, interacts with PKS1, RPT3, PHOT1 and PHOT2. In terms of tissue distribution, expressed in leaves, with the strongest expression on edges of the laminas. Not found in roots.

It is found in the cell membrane. Its function is as follows. Acts predominantly in the phot1 pathway. Involved in the leaf positioning and also in the phot2 pathway controlling the leaf flattening. Component of the network that modulates the very low-fluence response (VLFR) branch of phyA signaling. Regulates phytochrome-mediated photomorphogenesis and hypocotyl phototropism. May act by controlling auxin homeostasis. This Arabidopsis thaliana (Mouse-ear cress) protein is Protein PHYTOCHROME KINASE SUBSTRATE 2 (PKS2).